We begin with the raw amino-acid sequence, 105 residues long: Flexible cuticle protein 12 (105 aa).

The signal sequence occupies residues 1-16; that stretch reads MKSFVVVALLVAVAAA. One can recognise a Chitin-binding type R&amp;R domain in the interval 37–105; the sequence is VEGFQYGYET…KPVGAHIPVA (69 aa).

This is Flexible cuticle protein 12 (CP12) from Hyalophora cecropia (Cecropia moth).